The following is a 529-amino-acid chain: Cytochrome P450 monooxygenase 45 (529 aa).

A helical transmembrane segment spans residues 24–44 (VLTICILALLTFVLREIVLYF). N185 and N322 each carry an N-linked (GlcNAc...) asparagine glycan. C454 provides a ligand contact to heme.

Belongs to the cytochrome P450 family. Heme serves as cofactor.

It localises to the membrane. It participates in secondary metabolite biosynthesis. Functionally, cytochrome P450 monooxygenase that is able to use trans-stilbene as a substrate for oxidation. This Postia placenta (strain ATCC 44394 / Madison 698-R) (Brown rot fungus) protein is Cytochrome P450 monooxygenase 45.